A 327-amino-acid chain; its full sequence is MTDLSDFVANAQKEIKNAQNTEALDLIRVSYFGKKGHFSTHMASLSQLSVEDRPAAGRVINQAKKQIQQWLDTRKKTLQSELLARRLSSEIIDVSLPGRRLQHGGLHPVTLTIQRIECFFKKWGFSVESGPEIEDSEHNFDALNIPSHHPARTEQDTFWFDSERLLRTQTSGVQIRTMKKKGPPLRVIAPGRVYRHDYDQTHTPMFHQMEGLILDSDISFANLKNTLQCFLQYFFQKELPTRFRPSYFPFTEPSAEVDVMTQNGEWLEVLGCGMVHPNILTHLNIDPEHYSGFAFGMGIERLAMIAYGVTDLRAFFENDVRFLKQFK.

Glu252 contributes to the Mg(2+) binding site.

The protein belongs to the class-II aminoacyl-tRNA synthetase family. Phe-tRNA synthetase alpha subunit type 1 subfamily. In terms of assembly, tetramer of two alpha and two beta subunits. It depends on Mg(2+) as a cofactor.

It localises to the cytoplasm. It catalyses the reaction tRNA(Phe) + L-phenylalanine + ATP = L-phenylalanyl-tRNA(Phe) + AMP + diphosphate + H(+). This chain is Phenylalanine--tRNA ligase alpha subunit, found in Hamiltonella defensa subsp. Acyrthosiphon pisum (strain 5AT).